The primary structure comprises 660 residues: tRNA 5-methylaminomethyl-2-thiouridine biosynthesis bifunctional protein MnmC (660 aa).

Positions 1–241 are tRNA (mnm(5)s(2)U34)-methyltransferase; it reads MNDHPAQDAF…KREILRGHLQ (241 aa). The interval 268 to 660 is FAD-dependent cmnm(5)s(2)U34 oxidoreductase; that stretch reads IGAGLAGCAT…FLLRKLIRGT (393 aa).

This sequence in the N-terminal section; belongs to the methyltransferase superfamily. tRNA (mnm(5)s(2)U34)-methyltransferase family. The protein in the C-terminal section; belongs to the DAO family. Requires FAD as cofactor.

It localises to the cytoplasm. The enzyme catalyses 5-aminomethyl-2-thiouridine(34) in tRNA + S-adenosyl-L-methionine = 5-methylaminomethyl-2-thiouridine(34) in tRNA + S-adenosyl-L-homocysteine + H(+). In terms of biological role, catalyzes the last two steps in the biosynthesis of 5-methylaminomethyl-2-thiouridine (mnm(5)s(2)U) at the wobble position (U34) in tRNA. Catalyzes the FAD-dependent demodification of cmnm(5)s(2)U34 to nm(5)s(2)U34, followed by the transfer of a methyl group from S-adenosyl-L-methionine to nm(5)s(2)U34, to form mnm(5)s(2)U34. The polypeptide is tRNA 5-methylaminomethyl-2-thiouridine biosynthesis bifunctional protein MnmC (Stutzerimonas stutzeri (strain A1501) (Pseudomonas stutzeri)).